A 902-amino-acid polypeptide reads, in one-letter code: Leucine-rich repeat-containing G-protein coupled receptor 5 (902 aa).

A signal peptide spans 1 to 22 (MDTSKTSFFLFSVLCSLQLVGA). The Extracellular portion of the chain corresponds to 23–558 (ARPGKQQRSC…HLFGSWLTRT (536 aa)). 2 disulfides stabilise this stretch: Cys32–Cys38 and Cys36–Cys49. The LRRNT domain maps to 32–61 (CPTPCECEQEGMLVRVDCSDRALTSLPRNL). LRR repeat units follow at residues 41 to 61 (EGMLVRVDCSDRALTSLPRNL), 62 to 85 (SIFTSYLDLSMNNITNLPSNVMHN), 86 to 109 (LHFLEELRLAGNDLTYIPKGAFAG), 111 to 133 (GSLKVLMLQNNLLRQVPSEALHN), 134 to 157 (LRSLQSLRLDANHISYVPPSSFNG), 159 to 181 (FSLRHLWLDDNSLTEIPVRALES), 182 to 205 (LSALQAMTLALNKIHHIPDYAFRN), 207 to 229 (SSLVVLHLHNNRIYSLGKKCFDG), 230 to 253 (LHSLETLDLNYNNLDEFPAAIKTL), 254 to 276 (KNLKELGFHSNNIKSIPEQAFIG), 278 to 300 (PSLITIHFYDNPIQHVGRSAFQH), 302 to 324 (PELRTLILNGASQITEFPDLTGT), 325 to 347 (TSLESLTLTGAQLVYLPSAVCTQ), 348 to 372 (LPNLQVLDLSYNHIKDLPSFSGCQR), 374 to 393 (QKIDLRHNEVYEIRSTTFQQ), 394 to 417 (LVGLRSLDLAWNKIAVIHPNSFSS), and 418 to 441 (LPSLIKLDLSSNHLTSFPVTGLHG). Residues Asn60 and Asn74 are each glycosylated (N-linked (GlcNAc...) asparagine). N-linked (GlcNAc...) asparagine glycosylation is present at Asn205. The cysteines at positions 345 and 370 are disulfide-linked. Cys476 and Cys537 form a disulfide bridge. Residue Asn496 is glycosylated (N-linked (GlcNAc...) asparagine). Residues 559–579 (GVWLIVLLSFVCNALVIATVF) form a helical membrane-spanning segment. Over 580-589 (RPLSYVPSIK) the chain is Cytoplasmic. The chain crosses the membrane as a helical span at residues 590 to 610 (LLIGLIAIMNTLMGLSSGVLA). One copy of the LRR 18 repeat lies at 598–619 (MNTLMGLSSGVLATVDALTFGN). At 611-634 (TVDALTFGNFAQYGAWWESGVGCQ) the chain is on the extracellular side. Cysteines 633 and 708 form a disulfide. The helical transmembrane segment at 635 to 655 (ITGFLSVFAAETSIFLLTVAA) threads the bilayer. The Cytoplasmic segment spans residues 656–678 (LERGFSIKCTTKFETKSSFINVK). A helical membrane pass occupies residues 679-699 (LSIVFCFLLSIVIAVSPLLSG). Topologically, residues 700-718 (STYGTSPLCFPLLFGDPSS) are extracellular. The helical transmembrane segment at 719–739 (MGFMVALVLLNSLCFLVMTIA) threads the bilayer. The Cytoplasmic portion of the chain corresponds to 740–763 (YTKLYCSLEKGELENIWDCSMVKH). Residues 764–784 (IALLLFTNCILYCPVAFLSFS) form a helical membrane-spanning segment. At 785 to 798 (SLLNLTFISPEVNK) the chain is on the extracellular side. Asn788 and Asn797 each carry an N-linked (GlcNAc...) asparagine glycan. A helical membrane pass occupies residues 799–819 (SILLLIIPLPACLNPLLYILF). Topologically, residues 820–902 (NPHFKEDIGS…LSAVAFVPCH (83 aa)) are cytoplasmic.

The protein belongs to the G-protein coupled receptor 1 family.

The protein localises to the cell membrane. It localises to the golgi apparatus. It is found in the trans-Golgi network membrane. In terms of biological role, receptor for R-spondins that potentiates the canonical Wnt signaling pathway and acts as a stem cell marker of the intestinal epithelium and the hair follicle. Upon binding to R-spondins (RSPO1, RSPO2, RSPO3 or RSPO4), associates with phosphorylated LRP6 and frizzled receptors that are activated by extracellular Wnt receptors, triggering the canonical Wnt signaling pathway to increase expression of target genes. In contrast to classical G-protein coupled receptors, does not activate heterotrimeric G-proteins to transduce the signal. Involved in the development and/or maintenance of the adult intestinal stem cells during postembryonic development. The sequence is that of Leucine-rich repeat-containing G-protein coupled receptor 5 (lgr5) from Xenopus tropicalis (Western clawed frog).